A 74-amino-acid chain; its full sequence is ATP synthase subunit c (74 aa).

2 consecutive transmembrane segments (helical) span residues 5-25 and 49-69; these read LAHI…IGVG and LFIG…VALL.

Belongs to the ATPase C chain family. In terms of assembly, F-type ATPases have 2 components, F(1) - the catalytic core - and F(0) - the membrane proton channel. F(1) has five subunits: alpha(3), beta(3), gamma(1), delta(1), epsilon(1). F(0) has four main subunits: a(1), b(1), b'(1) and c(10-14). The alpha and beta chains form an alternating ring which encloses part of the gamma chain. F(1) is attached to F(0) by a central stalk formed by the gamma and epsilon chains, while a peripheral stalk is formed by the delta, b and b' chains.

The protein resides in the cell inner membrane. Functionally, f(1)F(0) ATP synthase produces ATP from ADP in the presence of a proton or sodium gradient. F-type ATPases consist of two structural domains, F(1) containing the extramembraneous catalytic core and F(0) containing the membrane proton channel, linked together by a central stalk and a peripheral stalk. During catalysis, ATP synthesis in the catalytic domain of F(1) is coupled via a rotary mechanism of the central stalk subunits to proton translocation. In terms of biological role, key component of the F(0) channel; it plays a direct role in translocation across the membrane. A homomeric c-ring of between 10-14 subunits forms the central stalk rotor element with the F(1) delta and epsilon subunits. In Roseobacter denitrificans (strain ATCC 33942 / OCh 114) (Erythrobacter sp. (strain OCh 114)), this protein is ATP synthase subunit c.